Reading from the N-terminus, the 793-residue chain is Pleckstrin homology domain-containing family H member 3 (793 aa).

A signal peptide spans methionine 1–threonine 18. Residues glutamate 28–threonine 62 are disordered. Residues leucine 29–threonine 41 show a composition bias toward acidic residues. Serine 30 bears the Phosphoserine mark. A PH domain is found at aspartate 95–alanine 199. Residues histidine 237–serine 399 enclose the MyTH4 domain. Positions leucine 404–arginine 754 constitute an FERM domain. Disordered stretches follow at residues valine 554–leucine 586 and lysine 598–glycine 622. A compositionally biased stretch (basic residues) spans lysine 598–glycine 608. An omega-N-methylarginine mark is found at arginine 638 and arginine 642. Positions proline 750–proline 762 are enriched in low complexity. A disordered region spans residues proline 750–aspartate 793. A compositionally biased stretch (polar residues) spans glutamine 782 to aspartate 793.

This is Pleckstrin homology domain-containing family H member 3 (PLEKHH3) from Homo sapiens (Human).